A 285-amino-acid chain; its full sequence is S-methyl-5'-thioadenosine phosphorylase (285 aa).

Phosphate-binding positions include Ser10, 52–53 (RH), and 85–86 (TA). Substrate is bound at residue Met188. Thr189 serves as a coordination point for phosphate. Residue 212–214 (DYD) participates in substrate binding.

This sequence belongs to the PNP/MTAP phosphorylase family. MTAP subfamily. As to quaternary structure, homotrimer.

It localises to the cytoplasm. The protein resides in the nucleus. The catalysed reaction is S-methyl-5'-thioadenosine + phosphate = 5-(methylsulfanyl)-alpha-D-ribose 1-phosphate + adenine. The protein operates within amino-acid biosynthesis; L-methionine biosynthesis via salvage pathway; S-methyl-5-thio-alpha-D-ribose 1-phosphate from S-methyl-5'-thioadenosine (phosphorylase route): step 1/1. Functionally, catalyzes the reversible phosphorylation of S-methyl-5'-thioadenosine (MTA) to adenine and 5-methylthioribose-1-phosphate. Involved in the breakdown of MTA, a major by-product of polyamine biosynthesis. Responsible for the first step in the methionine salvage pathway after MTA has been generated from S-adenosylmethionine. Has broad substrate specificity with 6-aminopurine nucleosides as preferred substrates. The protein is S-methyl-5'-thioadenosine phosphorylase of Caenorhabditis briggsae.